A 142-amino-acid chain; its full sequence is Nucleoside diphosphate kinase (142 aa).

Residues K11, F59, R87, T93, R104, and N114 each coordinate ATP. The active-site Pros-phosphohistidine intermediate is the H117.

Belongs to the NDK family. As to quaternary structure, homotetramer. Mg(2+) is required as a cofactor.

It is found in the cytoplasm. It catalyses the reaction a 2'-deoxyribonucleoside 5'-diphosphate + ATP = a 2'-deoxyribonucleoside 5'-triphosphate + ADP. The enzyme catalyses a ribonucleoside 5'-diphosphate + ATP = a ribonucleoside 5'-triphosphate + ADP. In terms of biological role, major role in the synthesis of nucleoside triphosphates other than ATP. The ATP gamma phosphate is transferred to the NDP beta phosphate via a ping-pong mechanism, using a phosphorylated active-site intermediate. The protein is Nucleoside diphosphate kinase of Aeromonas hydrophila subsp. hydrophila (strain ATCC 7966 / DSM 30187 / BCRC 13018 / CCUG 14551 / JCM 1027 / KCTC 2358 / NCIMB 9240 / NCTC 8049).